We begin with the raw amino-acid sequence, 316 residues long: Adenine deaminase (316 aa).

Positions 14, 16, and 194 each coordinate Zn(2+). Catalysis depends on glutamate 197, which acts as the Proton donor. Aspartate 275 lines the Zn(2+) pocket. Position 276 (aspartate 276) interacts with substrate.

It belongs to the metallo-dependent hydrolases superfamily. Adenosine and AMP deaminases family. Adenine deaminase type 2 subfamily. It depends on Zn(2+) as a cofactor.

The enzyme catalyses adenine + H2O + H(+) = hypoxanthine + NH4(+). Functionally, catalyzes the hydrolytic deamination of adenine to hypoxanthine. Plays an important role in the purine salvage pathway and in nitrogen catabolism. The polypeptide is Adenine deaminase (Pseudomonas entomophila (strain L48)).